Reading from the N-terminus, the 139-residue chain is Large ribosomal subunit protein uL22c (139 aa).

Belongs to the universal ribosomal protein uL22 family. Part of the 50S ribosomal subunit.

It is found in the plastid. The protein resides in the chloroplast. This protein binds specifically to 23S rRNA. Its function is as follows. The globular domain of the protein is located near the polypeptide exit tunnel on the outside of the subunit, while an extended beta-hairpin is found that lines the wall of the exit tunnel in the center of the 70S ribosome. The chain is Large ribosomal subunit protein uL22c (rpl22) from Cycas taitungensis (Prince sago).